A 447-amino-acid chain; its full sequence is Tektin-4 (447 aa).

Coiled-coil stretches lie at residues leucine 322–alanine 348 and phenylalanine 375–leucine 423.

Belongs to the tektin family. In terms of assembly, microtubule inner protein component of sperm flagellar doublet microtubules. Ubiquitinated, leading to its degradation. Deubiquitinated by USP16, promoting its stability. As to expression, detected in testis, where it is weakly expressed in round spermatids, and strongly expressed in the flagellum of step 16 elongated spermatids (at protein level). Expressed in spermatozoa. In the sperm flagellum, localizes to the principal piece and midpiece (at protein level). Specifically expressed in testis; not detected in other tissues tested.

It localises to the cytoplasm. The protein resides in the cytoskeleton. The protein localises to the cilium axoneme. Its subcellular location is the flagellum axoneme. In terms of biological role, microtubule inner protein (MIP) part of the dynein-decorated doublet microtubules (DMTs) in cilia and flagellar axoneme. Forms filamentous polymers in the walls of ciliary and flagellar microtubules. Contributes to normal sperm motility. The protein is Tektin-4 (Tekt4) of Mus musculus (Mouse).